Reading from the N-terminus, the 88-residue chain is LYR motif-containing protein 2 (88 aa).

The transit peptide at 1–19 (MAASRLPPATLTLKQFVRR) directs the protein to the mitochondrion.

This sequence belongs to the complex I LYR family.

It localises to the mitochondrion. In terms of biological role, involved in efficient integration of the N-module into mitochondrial respiratory chain complex I. The sequence is that of LYR motif-containing protein 2 (LYRM2) from Pongo abelii (Sumatran orangutan).